A 63-amino-acid chain; its full sequence is Alpha-conotoxin-like PuSG1.2 (63 aa).

The N-terminal stretch at 1–21 (MRCLALLVVTLLLFTATATTG) is a signal peptide. A propeptide spanning residues 22-43 (ASNGMNAAASGEAPDSISLAVR) is cleaved from the precursor. 2 cysteine pairs are disulfide-bonded: cysteine 46-cysteine 52 and cysteine 47-cysteine 60. The interval 48 to 50 (PDP) is lacks the Ser-Xaa-Pro motif that is crucial for potent interaction with nAChR.

Belongs to the conotoxin A superfamily. In terms of tissue distribution, expressed by the salivary gland.

Its subcellular location is the secreted. In terms of biological role, alpha-conopeptides-like may act on postsynaptic membranes, they bind to the nicotinic acetylcholine receptors (nAChR) and thus inhibit them. Has possibly a distinct nAChR binding mode from other alpha-conotoxins, due to a different three residue motif (lacks the Ser-Xaa-Pro motif). In Conus pulicarius (Flea-bitten cone), this protein is Alpha-conotoxin-like PuSG1.2.